The following is a 191-amino-acid chain: Protein phosphatase inhibitor 2 (191 aa).

The span at 20 to 31 shows a compositional bias: basic and acidic residues; sequence ESNKPVRQKITE. 2 disordered regions span residues 20 to 52 and 67 to 191; these read ESNK…RGRA and RNVL…PELI. 2 positions are modified to phosphoserine: serine 45 and serine 47. Acidic residues predominate over residues 93–109; the sequence is SDEEEEEADPMDQDEEG. The segment covering 114-136 has biased composition (basic and acidic residues); the sequence is KNERFNAHRKAHYDEFRKVKELR.

Interacts with protein phosphatase 1. Interacts with TOPP1, SRK2D/SNRK2.2, SRK2I/SNRK2.3, SRK2E/SNRK2.6, SRK2C/SNRK2.8 and PYL11. Post-translationally, phosphorylated in vivo. In terms of tissue distribution, expressed in roots, cotyledons, leaves, flowers and siliques.

The protein resides in the nucleus. The protein localises to the cytoplasm. In terms of biological role, inhibitor of protein-phosphatase 1 (PP1). Binds to and inhibits PP1 activity. Acts as negative regulator of abscisic acid (ABA) signaling. Enhances the inhibition of SRK2E/SNRK2.6 by TOPP1. May promote the interaction between TOPP1 and the ABA receptor PYL11. This is Protein phosphatase inhibitor 2 from Arabidopsis thaliana (Mouse-ear cress).